The following is a 427-amino-acid chain: Enolase (427 aa).

(2R)-2-phosphoglycerate is bound at residue Gln-163. The Proton donor role is filled by Glu-205. Residues Asp-242, Glu-285, and Asp-312 each contribute to the Mg(2+) site. Positions 337, 366, 367, and 388 each coordinate (2R)-2-phosphoglycerate. Lys-337 (proton acceptor) is an active-site residue.

The protein belongs to the enolase family. Requires Mg(2+) as cofactor.

It localises to the cytoplasm. The protein resides in the secreted. Its subcellular location is the cell surface. It carries out the reaction (2R)-2-phosphoglycerate = phosphoenolpyruvate + H2O. Its pathway is carbohydrate degradation; glycolysis; pyruvate from D-glyceraldehyde 3-phosphate: step 4/5. Functionally, catalyzes the reversible conversion of 2-phosphoglycerate (2-PG) into phosphoenolpyruvate (PEP). It is essential for the degradation of carbohydrates via glycolysis. This is Enolase from Rhodopseudomonas palustris (strain BisB5).